A 388-amino-acid polypeptide reads, in one-letter code: MNLHEYQAKQLFAEYGLPVSTGYAVDTPEAAVEAAKKIGGNKWVVKAQVHAGGRGKAGGVKLVDSYEEVAAFTQNWLGKNLVTYQTDANGQPVAKILVESCTDIANELYLGAVVDRSTRRVVFMASTEGGVEIEKVAEETPELIHKAIIDPLVGAQPYQARELAFKLGLNPTQIKQFTKVFLGLSQMFHDYDFALLEINPLVITDEGNLHCLDGKIGIDSNAVYRQKKMQEFHDPSQEDEREAHAAKWELNYVALDGNVGCMVNGAGLAMGTMDIVNLHGGKPANFLDVGGGATKERVAEAFKIILSDSNVKAVLVNIFGGIVRCDMIAEGIIGAVEQVGVNVPVVVRLEGTNAEKGREVLANSGLDIIAATSLKDAAEQVVKAAEGK.

The region spanning 9–244 is the ATP-grasp domain; it reads KQLFAEYGLP…PSQEDEREAH (236 aa). Residues Lys-46, 53–55, Glu-99, Thr-102, and Glu-107 contribute to the ATP site; that span reads GRG. The Mg(2+) site is built by Asn-199 and Asp-213. Substrate-binding positions include Asn-264 and 321-323; that span reads GIV.

This sequence belongs to the succinate/malate CoA ligase beta subunit family. In terms of assembly, heterotetramer of two alpha and two beta subunits. Mg(2+) serves as cofactor.

The enzyme catalyses succinate + ATP + CoA = succinyl-CoA + ADP + phosphate. It carries out the reaction GTP + succinate + CoA = succinyl-CoA + GDP + phosphate. The protein operates within carbohydrate metabolism; tricarboxylic acid cycle; succinate from succinyl-CoA (ligase route): step 1/1. In terms of biological role, succinyl-CoA synthetase functions in the citric acid cycle (TCA), coupling the hydrolysis of succinyl-CoA to the synthesis of either ATP or GTP and thus represents the only step of substrate-level phosphorylation in the TCA. The beta subunit provides nucleotide specificity of the enzyme and binds the substrate succinate, while the binding sites for coenzyme A and phosphate are found in the alpha subunit. This is Succinate--CoA ligase [ADP-forming] subunit beta from Marinomonas sp. (strain MWYL1).